Here is a 326-residue protein sequence, read N- to C-terminus: 5-dehydro-2-deoxygluconokinase (326 aa).

The protein belongs to the carbohydrate kinase PfkB family.

The catalysed reaction is 5-dehydro-2-deoxy-D-gluconate + ATP = 6-phospho-5-dehydro-2-deoxy-D-gluconate + ADP + H(+). It participates in polyol metabolism; myo-inositol degradation into acetyl-CoA; acetyl-CoA from myo-inositol: step 5/7. Its function is as follows. Catalyzes the phosphorylation of 5-dehydro-2-deoxy-D-gluconate (2-deoxy-5-keto-D-gluconate or DKG) to 6-phospho-5-dehydro-2-deoxy-D-gluconate (DKGP). This Lacticaseibacillus casei (Lactobacillus casei) protein is 5-dehydro-2-deoxygluconokinase.